Here is a 251-residue protein sequence, read N- to C-terminus: Hydroxyacylglutathione hydrolase (251 aa).

Zn(2+)-binding residues include H53, H55, D57, H58, H110, D127, and H165.

It belongs to the metallo-beta-lactamase superfamily. Glyoxalase II family. In terms of assembly, monomer. Requires Zn(2+) as cofactor.

It catalyses the reaction an S-(2-hydroxyacyl)glutathione + H2O = a 2-hydroxy carboxylate + glutathione + H(+). Its pathway is secondary metabolite metabolism; methylglyoxal degradation; (R)-lactate from methylglyoxal: step 2/2. Thiolesterase that catalyzes the hydrolysis of S-D-lactoyl-glutathione to form glutathione and D-lactic acid. The polypeptide is Hydroxyacylglutathione hydrolase (Klebsiella pneumoniae subsp. pneumoniae (strain ATCC 700721 / MGH 78578)).